Reading from the N-terminus, the 255-residue chain is Complement C1q-like protein 3 (255 aa).

Positions 1-20 are cleaved as a signal peptide; sequence MVLLLVILIPVLVSSAGTSA. The interval 39–109 is disordered; that stretch reads KAPSTAATPD…GLPGPPGAPG (71 aa). In terms of domain architecture, Collagen-like spans 61-111; sequence GPKGEAGRPGKAGPRGPPGEPGPPGPMGPPGEKGEPGRQGLPGPPGAPGLN. The span at 75–89 shows a compositional bias: pro residues; sequence RGPPGEPGPPGPMGP. Residues 122–255 enclose the C1q domain; it reads STVPKIAFYA…TFSGFIIYAD (134 aa).

Forms homooligomers. Interacts with ADGRB3. Interacts with C1QL2 and C1QL4, when proteins are coexpressed; this interaction does not occur after secretion. As to expression, highly expressed in adipose tissue, with expression levels at least 2 orders of magnitude higher than in other tissues, including brain and kidney.

The protein resides in the secreted. Its function is as follows. May regulate the number of excitatory synapses that are formed on hippocampus neurons. Has no effect on inhibitory synapses. Plays a role in glucose homeostasis. Via AMPK signaling pathway, stimulates glucose uptake in adipocytes, myotubes and hepatocytes and enhances insulin-stimulated glucose uptake. In a hepatoma cell line, reduces the expression of gluconeogenic enzymes G6PC1 and PCK1 and hence decreases de novo glucose production. This is Complement C1q-like protein 3 (C1QL3) from Homo sapiens (Human).